The following is a 445-amino-acid chain: Serine protease inhibitor A3F (445 aa).

Asparagine 28, asparagine 94, asparagine 174, and asparagine 259 each carry an N-linked (GlcNAc...) asparagine glycan. Positions 357–382 (GTEAAAGTGYQNLQCCQGVIYSMKIY) are RCL.

It belongs to the serpin family.

The sequence is that of Serine protease inhibitor A3F (Serpina3f) from Mus musculus (Mouse).